The primary structure comprises 167 residues: MASNDDAPVGAANGNGNTGAQPSLNVLAQYVKDLSFESPGAPNSLRGRDKAPGIAINVNVNANPLSDKQFDVNLTLNAKASFDQEVLFNVELVYGGVFAISGFPQEHMLPILFIECPRLLFPFARQIIAEATRNGGFPPLMLDPIDFAQMFQQKIAEDQAASKVKVS.

The disordered stretch occupies residues 1–20; sequence MASNDDAPVGAANGNGNTGA.

Belongs to the SecB family. As to quaternary structure, homotetramer, a dimer of dimers. One homotetramer interacts with 1 SecA dimer.

Its subcellular location is the cytoplasm. Its function is as follows. One of the proteins required for the normal export of preproteins out of the cell cytoplasm. It is a molecular chaperone that binds to a subset of precursor proteins, maintaining them in a translocation-competent state. It also specifically binds to its receptor SecA. This is Protein-export protein SecB from Mesorhizobium japonicum (strain LMG 29417 / CECT 9101 / MAFF 303099) (Mesorhizobium loti (strain MAFF 303099)).